Here is a 131-residue protein sequence, read N- to C-terminus: D-ribose pyranase (131 aa).

The Proton donor role is filled by H20. Residues D28, H98, and 120–122 (YSN) contribute to the substrate site.

This sequence belongs to the RbsD / FucU family. RbsD subfamily. Homodecamer.

The protein localises to the cytoplasm. The catalysed reaction is beta-D-ribopyranose = beta-D-ribofuranose. It functions in the pathway carbohydrate metabolism; D-ribose degradation; D-ribose 5-phosphate from beta-D-ribopyranose: step 1/2. Functionally, catalyzes the interconversion of beta-pyran and beta-furan forms of D-ribose. The sequence is that of D-ribose pyranase from Limosilactobacillus fermentum (strain NBRC 3956 / LMG 18251) (Lactobacillus fermentum).